The following is a 716-amino-acid chain: Polyribonucleotide nucleotidyltransferase (716 aa).

Mg(2+)-binding residues include aspartate 495 and aspartate 501. Residues 562–621 form the KH domain; the sequence is PRLFRIQINPEQIGLVIGPGGKTIRSITEQTGAKIDIEDTGAVTISAVDADSALRAKSII. The S1 motif domain maps to 631-699; sequence GDVYIGKVTR…QKGRVNLTRK (69 aa).

This sequence belongs to the polyribonucleotide nucleotidyltransferase family. Mg(2+) serves as cofactor.

Its subcellular location is the cytoplasm. The enzyme catalyses RNA(n+1) + phosphate = RNA(n) + a ribonucleoside 5'-diphosphate. Involved in mRNA degradation. Catalyzes the phosphorolysis of single-stranded polyribonucleotides processively in the 3'- to 5'-direction. The sequence is that of Polyribonucleotide nucleotidyltransferase from Synechococcus sp. (strain ATCC 27144 / PCC 6301 / SAUG 1402/1) (Anacystis nidulans).